The chain runs to 876 residues: Envelope glycoprotein gp160 (876 aa).

A signal peptide spans Met1–Lys33. At Gln34 to Ile697 the chain is on the extracellular side. Cysteines 55 and 75 form a disulfide. 19 N-linked (GlcNAc...) asparagine; by host glycosylation sites follow: Asn60, Asn89, Asn138, Asn144, Asn152, Asn156, Asn181, Asn187, Asn197, Asn229, Asn234, Asn241, Asn262, Asn276, Asn293, Asn323, Asn337, Asn357, and Asn361. Disulfide bonds link Cys120-Cys205, Cys127-Cys196, Cys132-Cys153, Cys218-Cys247, and Cys228-Cys239. The tract at residues Cys132–Asn152 is V1. The segment at Cys153 to Cys196 is V2. The interval Cys296–Tyr333 is V3. A disulfide bridge connects residues Cys296 and Cys334. The tract at residues Thr369 to Leu379 is CD4-binding loop. Disulfide bonds link Cys383-Cys452 and Cys390-Cys425. Residues Cys390 to Cys425 are V4. 8 N-linked (GlcNAc...) asparagine; by host glycosylation sites follow: Asn391, Asn397, Asn402, Asn415, Asn420, Asn449, Asn455, and Asn468. V5 stretches follow at residues Asn468–Val478 and Thr470–Val478. Residues Ala524–Ala544 form a fusion peptide region. Residues Arg586 to Arg604 form an immunosuppression region. Cys610 and Cys616 are joined by a disulfide. N-linked (GlcNAc...) asparagine; by host glycosylation is found at Asn623, Asn638, and Asn650. Positions Gln646–Ala680 form a coiled coil. The segment at Glu675–Lys696 is MPER; binding to GalCer. A helical transmembrane segment spans residues Ala698–Val718. The Cytoplasmic segment spans residues Lys719 to Val876. A YXXL motif; contains endocytosis signal motif is present at residues Tyr725–Leu728.

Belongs to the HIV-1 env protein family. In terms of assembly, the mature envelope protein (Env) consists of a homotrimer of non-covalently associated gp120-gp41 heterodimers. The resulting complex protrudes from the virus surface as a spike. There seems to be as few as 10 spikes on the average virion. Interacts with host CD4, CCR5 and CXCR4. Gp120 also interacts with the C-type lectins CD209/DC-SIGN and CLEC4M/DC-SIGNR (collectively referred to as DC-SIGN(R)). Gp120 and gp41 interact with GalCer. Gp120 interacts with host ITGA4/ITGB7 complex; on CD4+ T-cells, this interaction results in rapid activation of integrin ITGAL/LFA-1, which facilitates efficient cell-to-cell spreading of HIV-1. Gp120 interacts with cell-associated heparan sulfate; this interaction increases virus infectivity on permissive cells and may be involved in infection of CD4- cells. The mature envelope protein (Env) consists of a homotrimer of non-covalently associated gp120-gp41 heterodimers. The resulting complex protrudes from the virus surface as a spike. There seems to be as few as 10 spikes on the average virion. In terms of processing, highly glycosylated by host. The high number of glycan on the protein is reffered to as 'glycan shield' because it contributes to hide protein sequence from adaptive immune system. Post-translationally, palmitoylation of the transmembrane protein and of Env polyprotein (prior to its proteolytic cleavage) is essential for their association with host cell membrane lipid rafts. Palmitoylation is therefore required for envelope trafficking to classical lipid rafts, but not for viral replication. Specific enzymatic cleavages in vivo yield mature proteins. Envelope glycoproteins are synthesized as an inactive precursor that is heavily N-glycosylated and processed likely by host cell furin in the Golgi to yield the mature SU and TM proteins. The cleavage site between SU and TM requires the minimal sequence [KR]-X-[KR]-R. About 2 of the 9 disulfide bonds of gp41 are reduced by P4HB/PDI, following binding to CD4 receptor.

The protein localises to the virion membrane. It is found in the host cell membrane. Its subcellular location is the host endosome membrane. Functionally, oligomerizes in the host endoplasmic reticulum into predominantly trimers. In a second time, gp160 transits in the host Golgi, where glycosylation is completed. The precursor is then proteolytically cleaved in the trans-Golgi and thereby activated by cellular furin or furin-like proteases to produce gp120 and gp41. Its function is as follows. Attaches the virus to the host lymphoid cell by binding to the primary receptor CD4. This interaction induces a structural rearrangement creating a high affinity binding site for a chemokine coreceptor like CXCR4 and/or CCR5. Acts as a ligand for CD209/DC-SIGN and CLEC4M/DC-SIGNR, which are respectively found on dendritic cells (DCs), and on endothelial cells of liver sinusoids and lymph node sinuses. These interactions allow capture of viral particles at mucosal surfaces by these cells and subsequent transmission to permissive cells. HIV subverts the migration properties of dendritic cells to gain access to CD4+ T-cells in lymph nodes. Virus transmission to permissive T-cells occurs either in trans (without DCs infection, through viral capture and transmission), or in cis (following DCs productive infection, through the usual CD4-gp120 interaction), thereby inducing a robust infection. In trans infection, bound virions remain infectious over days and it is proposed that they are not degraded, but protected in non-lysosomal acidic organelles within the DCs close to the cell membrane thus contributing to the viral infectious potential during DCs' migration from the periphery to the lymphoid tissues. On arrival at lymphoid tissues, intact virions recycle back to DCs' cell surface allowing virus transmission to CD4+ T-cells. In terms of biological role, acts as a class I viral fusion protein. Under the current model, the protein has at least 3 conformational states: pre-fusion native state, pre-hairpin intermediate state, and post-fusion hairpin state. During fusion of viral and target intracellular membranes, the coiled coil regions (heptad repeats) assume a trimer-of-hairpins structure, positioning the fusion peptide in close proximity to the C-terminal region of the ectodomain. The formation of this structure appears to drive apposition and subsequent fusion of viral and target cell membranes. Complete fusion occurs in host cell endosomes and is dynamin-dependent, however some lipid transfer might occur at the plasma membrane. The virus undergoes clathrin-dependent internalization long before endosomal fusion, thus minimizing the surface exposure of conserved viral epitopes during fusion and reducing the efficacy of inhibitors targeting these epitopes. Membranes fusion leads to delivery of the nucleocapsid into the cytoplasm. In Homo sapiens (Human), this protein is Envelope glycoprotein gp160.